The chain runs to 263 residues: Glutamate 5-kinase (263 aa).

Lys15 contributes to the ATP binding site. Ser55, Asp142, and Asn154 together coordinate substrate. Residues 174 to 175 (SD) and 216 to 222 (TGGIETK) each bind ATP.

The protein belongs to the glutamate 5-kinase family.

It localises to the cytoplasm. The catalysed reaction is L-glutamate + ATP = L-glutamyl 5-phosphate + ADP. It functions in the pathway amino-acid biosynthesis; L-proline biosynthesis; L-glutamate 5-semialdehyde from L-glutamate: step 1/2. Functionally, catalyzes the transfer of a phosphate group to glutamate to form L-glutamate 5-phosphate. In Alkaliphilus oremlandii (strain OhILAs) (Clostridium oremlandii (strain OhILAs)), this protein is Glutamate 5-kinase.